Here is a 208-residue protein sequence, read N- to C-terminus: FMN-dependent NADH:quinone oxidoreductase (208 aa).

FMN contacts are provided by residues 17–19 (SNS), 99–102 (MWNL), and 143–146 (SRGG).

It belongs to the azoreductase type 1 family. As to quaternary structure, homodimer. It depends on FMN as a cofactor.

The catalysed reaction is 2 a quinone + NADH + H(+) = 2 a 1,4-benzosemiquinone + NAD(+). It catalyses the reaction N,N-dimethyl-1,4-phenylenediamine + anthranilate + 2 NAD(+) = 2-(4-dimethylaminophenyl)diazenylbenzoate + 2 NADH + 2 H(+). In terms of biological role, quinone reductase that provides resistance to thiol-specific stress caused by electrophilic quinones. Its function is as follows. Also exhibits azoreductase activity. Catalyzes the reductive cleavage of the azo bond in aromatic azo compounds to the corresponding amines. The chain is FMN-dependent NADH:quinone oxidoreductase from Staphylococcus aureus (strain MRSA252).